Consider the following 522-residue polypeptide: MSFSRSAADAADTLPDLAATLGAPALGAFVTLGDAFHTRLPAAPLPAPYVVGFSDEVAQLLGLPASFAAQPGFAELFAGNPTRDWPAHALPYASVYSGHQFGVWAGQLGDGRALTIGELPGTDGRRYELQIKGGGRTPYSRMGDGRAVLRSSIREFLCSEAMHHLGIPTTRALTVIGSDQPVVREEIETSAVVTRVSESFVRFGHFEHFFSNDRPDLLRQLADHVIDRFYPACRDADDPYLALLEAAMLRTADLVAQWQAVGFCHGVMNTDNMSILGLTIDYGPFGFVDAFDANHICNHSDTSGRYAYRMQPRIAHWNCYCLAQALLPLIGLQHGIADDDARAERAVDDAQAVLAKFPERFGPALERAMRAKLGLELERENDAELANKLLETMHASHADFTLTFRRLAQLSKHDASRDAPVRDLFIDRDAFDAWANLYRARLSEETRDDAARAAAMNRVNPKYVLRNHLAEVAIRRAKEKDFSEVERLAQVLRRPFDEQPEHEAYAALPPDWAGSLEVSCSS.

ATP is bound by residues G109, G111, R112, K132, D144, G145, R195, and R202. The active-site Proton acceptor is the D271. Mg(2+)-binding residues include N272 and D281. Position 281 (D281) interacts with ATP.

This sequence belongs to the SELO family. It depends on Mg(2+) as a cofactor. Requires Mn(2+) as cofactor.

It carries out the reaction L-seryl-[protein] + ATP = 3-O-(5'-adenylyl)-L-seryl-[protein] + diphosphate. The catalysed reaction is L-threonyl-[protein] + ATP = 3-O-(5'-adenylyl)-L-threonyl-[protein] + diphosphate. The enzyme catalyses L-tyrosyl-[protein] + ATP = O-(5'-adenylyl)-L-tyrosyl-[protein] + diphosphate. It catalyses the reaction L-histidyl-[protein] + UTP = N(tele)-(5'-uridylyl)-L-histidyl-[protein] + diphosphate. It carries out the reaction L-seryl-[protein] + UTP = O-(5'-uridylyl)-L-seryl-[protein] + diphosphate. The catalysed reaction is L-tyrosyl-[protein] + UTP = O-(5'-uridylyl)-L-tyrosyl-[protein] + diphosphate. Its function is as follows. Nucleotidyltransferase involved in the post-translational modification of proteins. It can catalyze the addition of adenosine monophosphate (AMP) or uridine monophosphate (UMP) to a protein, resulting in modifications known as AMPylation and UMPylation. The chain is Protein nucleotidyltransferase YdiU from Burkholderia ambifaria (strain MC40-6).